A 921-amino-acid polypeptide reads, in one-letter code: Leucine--tRNA ligase (921 aa).

The 'HIGH' region signature appears at 41 to 52; sequence PYPSGSGLHVGH. Residues 695 to 699 carry the 'KMSKS' region motif; that stretch reads KMSKS. Residue lysine 698 participates in ATP binding.

The protein belongs to the class-I aminoacyl-tRNA synthetase family.

The protein localises to the cytoplasm. The catalysed reaction is tRNA(Leu) + L-leucine + ATP = L-leucyl-tRNA(Leu) + AMP + diphosphate. This is Leucine--tRNA ligase from Cytophaga hutchinsonii (strain ATCC 33406 / DSM 1761 / CIP 103989 / NBRC 15051 / NCIMB 9469 / D465).